We begin with the raw amino-acid sequence, 697 residues long: Zinc finger and BTB domain-containing protein 24 (697 aa).

A BTB domain is found at 10-133 (GQLVVHSDAH…AYTDFQNNHS (124 aa)). A compositionally biased stretch (polar residues) spans 131–142 (NHSSPKPTTLNT). 2 disordered regions span residues 131-176 (NHSS…EEKS) and 209-254 (EQIA…SRYS). Positions 159–171 (KRKRGRPKKVNTL) form a DNA-binding region, a.T hook. Positions 212-245 (AAKEKEESEPTCEPSREEEMPVEKDENYDPKTED) are enriched in basic and acidic residues. 8 consecutive C2H2-type zinc fingers follow at residues 294–316 (ARCKDCGKVFKYNHFLAIHQRSH), 322–344 (FKCNECGKGFAQKHSLQVHTRMH), 350–372 (YTCTVCSKALTTKHSLLEHMSLH), 378–400 (FTCDQCGKYFSQNRQLKSHYRVH), 406–428 (PECKDCHRKFMDVSQLKKHLRTH), 434–456 (FTCEICGKSFTAKSSLQTHIRIH), 462–484 (YSCGICGKSFSDSSAKRRHCILH), and 490–512 (FSCPECNLQFARLDNLKAHLKIH). The interval 652-697 (QEQTEELHLATSTSDPAQHLQLTQEPGPPPPTHHVPQPTPLGQEQS) is disordered. Positions 677–690 (PGPPPPTHHVPQPT) are enriched in pro residues.

Belongs to the krueppel C2H2-type zinc-finger protein family. Interacts with MN1. Widely expressed, with highest levels in naive B-cells.

It is found in the nucleus. Its function is as follows. May be involved in BMP2-induced transcription. The protein is Zinc finger and BTB domain-containing protein 24 (ZBTB24) of Homo sapiens (Human).